Reading from the N-terminus, the 897-residue chain is Echinoderm microtubule-associated protein-like 3 (897 aa).

M1 is modified (N-acetylmethionine). Residues 16–43 (LQTLSQRLRVQEEEMELVKAALAEALRL) are a coiled coil. The segment covering 51-68 (TTLQGSGISAPTRNSSIT) has biased composition (polar residues). The segment at 51–210 (TTLQGSGISA…GGPGSRRSNY (160 aa)) is disordered. Low complexity-rich tracts occupy residues 96 to 108 (PSSG…NGPP), 118 to 132 (SGTQ…SSGA), and 155 to 164 (RNSSSSSSPS). The span at 175 to 190 (AASSANLLLRSGSTES) shows a compositional bias: polar residues. S177, S199, and S205 each carry phosphoserine. 13 WD repeats span residues 235-287 (RSLE…LYRP), 296-345 (GGGQ…IWDS), 351-393 (LQEI…VWDC), 399-435 (LAEI…FWNW), 449-488 (RKQG…TWGR), 505-544 (YTIV…QWGP), 550-585 (QEAE…LRGD), 590-627 (FSPV…LWDG), 630-668 (HALA…VLDT), 675-710 (SDVT…IYSV), 717-756 (SSRF…YWDV), 766-824 (RYES…LFQY), and 831-870 (APSR…QWRV). The tract at residues 876-897 (SGPAPATPSRTPSLSPASSLDV) is disordered. T882 is subject to Phosphothreonine; by CDK1. Residues 883 to 897 (PSRTPSLSPASSLDV) show a composition bias toward polar residues. S884 bears the Phosphoserine mark.

This sequence belongs to the WD repeat EMAP family. As to quaternary structure, homotrimer; self-association is mediated by the N-terminal coiled coil. Interacts with EML2 but not with EML1. Interacts (phosphorylated at Thr-882) with TUBG1, HAUS1, HAUS2, HAUS3, HAUS4, HAUS5, HAUS6, HAUS7 and HAUS8. In terms of processing, phosphorylation at Thr-882 during mitosis is required for interaction with TUBG1, HAUS1, HAUS2, HAUS3, HAUS4, HAUS5, HAUS6, HAUS7 and HAUS8 and their recruitment to spindle microtubules.

The protein resides in the cytoplasm. The protein localises to the cytoskeleton. It localises to the nucleus. It is found in the midbody. Its subcellular location is the spindle. Functionally, regulates mitotic spindle assembly, microtubule (MT)-kinetochore attachment and chromosome separation via recruitment of HAUS augmin-like complex and TUBG1 to the existing MTs and promoting MT-based MT nucleation. Required for proper alignnment of chromosomes during metaphase. In Mus musculus (Mouse), this protein is Echinoderm microtubule-associated protein-like 3 (Eml3).